A 2530-amino-acid polypeptide reads, in one-letter code: Cullin-9 (2530 aa).

A Glycyl lysine isopeptide (Lys-Gly) (interchain with G-Cter in ubiquitin) cross-link involves residue lysine 87. Residues 367–440 (RSEFSSRSGY…HWHMLEILGP (74 aa)) form the CPH domain. 2 disordered regions span residues 585 to 639 (LPSS…KAQS) and 930 to 951 (RGSPERAVLETPSTQGQDGSPE). The segment covering 940 to 949 (TPSTQGQDGS) has biased composition (polar residues). At serine 978 the chain carries Phosphoserine. A DOC domain is found at 1145 to 1324 (PITIPFFDVF…RTCLFYTIRA (180 aa)). 1365–1372 (AAQALGKT) serves as a coordination point for ATP. 2 disordered regions span residues 1435 to 1468 (EAPPGPSPEPSSQPLSKNSKGQDGSPTPAPTPVC) and 1667 to 1690 (GDQEEWRPEKVEEDDEGQETGREL). Position 1459 is a phosphoserine (serine 1459). A Glycyl lysine isopeptide (Lys-Gly) (interchain with G-Cter in NEDD8) cross-link involves residue lysine 1884. Positions 2070–2287 (RPDQCPVCVT…KDYYNCSAMV (218 aa)) are TRIAD supradomain. Zn(2+)-binding residues include cysteine 2074, cysteine 2077, cysteine 2092, histidine 2094, cysteine 2097, cysteine 2100, cysteine 2119, cysteine 2124, cysteine 2164, cysteine 2170, cysteine 2185, cysteine 2188, cysteine 2193, cysteine 2196, histidine 2202, cysteine 2207, cysteine 2240, and cysteine 2243. The RING-type 1 zinc finger occupies 2074–2124 (CPVCVTPLGPHDDSPSLCCLHCCCKSCWNEYLTTRIEQNFVLNCTCPIADC). An IBR-type zinc finger spans residues 2144–2207 (SKYEKALLRG…FPEAHYPASC (64 aa)). An RING-type 2; atypical zinc finger spans residues 2240–2269 (CPSCQAPIEKNEGCLHMTCARCNHGFCWRC). Residue cysteine 2253 is part of the active site. Zn(2+) contacts are provided by cysteine 2258, cysteine 2261, cysteine 2266, cysteine 2269, histidine 2277, and cysteine 2283. Serine 2440 is subject to Phosphoserine. The disordered stretch occupies residues 2443-2530 (VETREVKGSN…DEDEDDESYD (88 aa)). Residues 2452–2462 (NVPSDQPQGSS) are compositionally biased toward polar residues. A coiled-coil region spans residues 2459–2500 (QGSSGLEVEDEEEEEEEEEEEEEEEEEDVPEWQHEFDEELDN). Acidic residues-rich tracts occupy residues 2465–2510 (EVED…EESE) and 2520–2530 (GDEDEDDESYD).

It belongs to the cullin family. As to quaternary structure, component of a Cul9-RING complex consisting of CUL9 and RBX1; the CUL9-RBX1 complex is a heterododecamer composed of six CUL9 and six RBX1 protomers. Interacts (via C-terminal TRIAD/RBR supradomain) with E2 ubiquitin-conjugating enzyme UBE2L3. Interacts with CUL7; the interaction with the CUL7 component of the 3M complex leads to inhibition of CUL9 activity. The CUL7-CUL9 heterodimer seems to interact specifically with TP53, likely via the CPH domain. Forms a complex with p53/TP53 in the cytoplasm of unstressed cells. Interacts with UBCH7 and UBCH8. Post-translationally, autoubiquitinated by the CUL9-RBX1 complex at Lys-87. Neddylated. Neddylation is mediated by E1 enzyme UBA3-NAE1 complex and E2 enzyme UBE2F. Structural rearrangment of the C-terminal TRIAD/RBR supradomain may play a role in neddylation and deneddylation.

It localises to the cytoplasm. In terms of biological role, core component of the Cul9-RING ubiquitin-protein ligase complex composed of CUL9 and RBX1. The CUL9-RBX1 complex mediates ubiquitination and subsequent degradation of BIRC5 and is required to maintain microtubule dynamics and genome integrity. Acts downstream of the 3M complex, which inhibits CUL9 activity and the ubiquitination of BIRC5. The CUL9-RBX1 complex also mediates mono-ubiquitination of p53/TP53. Acts as a cytoplasmic anchor protein in p53/TP53-associated protein complex. Regulates the subcellular localization of p53/TP53 and its subsequent function. Ubiquitinates apurinic/apyrimidinic endodeoxyribonuclease APEX2. Ubiquitination by the CUL9-RBX1 complex is predominantly mediated by E2 ubiquitin-conjugating enzymes UBE2L3 and UBE2D2. This Mus musculus (Mouse) protein is Cullin-9 (Cul9).